A 507-amino-acid polypeptide reads, in one-letter code: Probable Xaa-Pro aminopeptidase HCBG_01484 (507 aa).

Mn(2+) contacts are provided by aspartate 283, aspartate 294, glutamate 431, and glutamate 469.

Belongs to the peptidase M24B family. The cofactor is Mn(2+).

The enzyme catalyses Release of any N-terminal amino acid, including proline, that is linked to proline, even from a dipeptide or tripeptide.. Catalyzes the removal of a penultimate prolyl residue from the N-termini of peptides. In Ajellomyces capsulatus (strain G186AR / H82 / ATCC MYA-2454 / RMSCC 2432) (Darling's disease fungus), this protein is Probable Xaa-Pro aminopeptidase HCBG_01484.